A 530-amino-acid polypeptide reads, in one-letter code: Type 2 DNA topoisomerase 6 subunit B (530 aa).

Residues asparagine 42, aspartate 76, 96–98 (SSK), 107–113 (MYGLGVK), and lysine 427 each bind ATP.

It belongs to the TOP6B family. In terms of assembly, homodimer. Heterotetramer of two Top6A and two Top6B chains.

The enzyme catalyses ATP-dependent breakage, passage and rejoining of double-stranded DNA.. Not inhibited by the DNA gyrase inhibitor novobiocin, instead inhibited by eukaryotic topoisomerase inhibitors such as m- and o-amsacrine, ellipticine, and the quinolone CP-115,953. Radicicol inhibits the ATPase activity. In terms of biological role, relaxes both positive and negative supercoils and exhibits a strong decatenase and unknotting activity; it cannot introduce DNA supercoils. ATP is absolutely required for DNA cleavage; the nonhydrolyzable analog AMP-PNP generates nicked or linear products from a supercoiled dsDNA substrate. Generates staggered two-nucleotide long 5' overhangs. The enzyme is covalently attached transiently to the 5'-ends of the cleaved strands. The chain is Type 2 DNA topoisomerase 6 subunit B from Saccharolobus shibatae (strain ATCC 51178 / DSM 5389 / JCM 8931 / NBRC 15437 / B12) (Sulfolobus shibatae).